Here is a 551-residue protein sequence, read N- to C-terminus: Putative BTB/POZ domain-containing protein L76 (551 aa).

The BTB domain occupies 19–90; it reads TDIILEIEDD…FYGQENDVID (72 aa).

It belongs to the mimivirus BTB/WD family.

The polypeptide is Putative BTB/POZ domain-containing protein L76 (Acanthamoeba polyphaga (Amoeba)).